A 452-amino-acid chain; its full sequence is Bifunctional protein GlmU (452 aa).

The segment at 1-226 is pyrophosphorylase; it reads MSLHIIILAA…LHEVEGVNNR (226 aa). UDP-N-acetyl-alpha-D-glucosamine-binding positions include 8-11, lysine 22, glutamine 73, 78-79, 100-102, glycine 136, glutamate 151, asparagine 166, and asparagine 224; these read LAAG, GT, and YGD. A Mg(2+)-binding site is contributed by aspartate 102. A Mg(2+)-binding site is contributed by asparagine 224. Residues 227 to 247 form a linker region; the sequence is IQLAALERAYQQQVAEELMLA. The segment at 248 to 452 is N-acetyltransferase; that stretch reads GATLRDPARV…IDGWTRPVKK (205 aa). Positions 330 and 348 each coordinate UDP-N-acetyl-alpha-D-glucosamine. The active-site Proton acceptor is histidine 360. Residues tyrosine 363 and asparagine 374 each contribute to the UDP-N-acetyl-alpha-D-glucosamine site. Acetyl-CoA contacts are provided by residues alanine 377, 383–384, serine 402, alanine 420, and arginine 437; that span reads NY.

In the N-terminal section; belongs to the N-acetylglucosamine-1-phosphate uridyltransferase family. This sequence in the C-terminal section; belongs to the transferase hexapeptide repeat family. Homotrimer. Mg(2+) is required as a cofactor.

It localises to the cytoplasm. The enzyme catalyses alpha-D-glucosamine 1-phosphate + acetyl-CoA = N-acetyl-alpha-D-glucosamine 1-phosphate + CoA + H(+). The catalysed reaction is N-acetyl-alpha-D-glucosamine 1-phosphate + UTP + H(+) = UDP-N-acetyl-alpha-D-glucosamine + diphosphate. It participates in nucleotide-sugar biosynthesis; UDP-N-acetyl-alpha-D-glucosamine biosynthesis; N-acetyl-alpha-D-glucosamine 1-phosphate from alpha-D-glucosamine 6-phosphate (route II): step 2/2. The protein operates within nucleotide-sugar biosynthesis; UDP-N-acetyl-alpha-D-glucosamine biosynthesis; UDP-N-acetyl-alpha-D-glucosamine from N-acetyl-alpha-D-glucosamine 1-phosphate: step 1/1. It functions in the pathway bacterial outer membrane biogenesis; LPS lipid A biosynthesis. Its function is as follows. Catalyzes the last two sequential reactions in the de novo biosynthetic pathway for UDP-N-acetylglucosamine (UDP-GlcNAc). The C-terminal domain catalyzes the transfer of acetyl group from acetyl coenzyme A to glucosamine-1-phosphate (GlcN-1-P) to produce N-acetylglucosamine-1-phosphate (GlcNAc-1-P), which is converted into UDP-GlcNAc by the transfer of uridine 5-monophosphate (from uridine 5-triphosphate), a reaction catalyzed by the N-terminal domain. The protein is Bifunctional protein GlmU of Hahella chejuensis (strain KCTC 2396).